The sequence spans 48 residues: Lantibiotic salivaricin-A (48 aa).

The propeptide occupies 1 to 26 (MKNSKDILNNAIEEVSEKELMEVAGG). 2 cross-links (beta-methyllanthionine (Thr-Cys)) span residues 35-40 (TITDDC) and 37-47 (TDDCPNSVFVC). A cross-link (lanthionine (Ser-Cys)) is located at residues 43 to 48 (SVFVCC).

The protein belongs to the type A lantibiotic family. Maturation of lantibiotics involves the enzymatic conversion of Thr, and Ser into dehydrated AA and the formation of thioether bonds with cysteine. This is followed by membrane translocation and cleavage of the modified precursor.

Functionally, lanthionine-containing peptide antibiotic (lantibiotic) active on Gram-positive bacteria. The bactericidal activity of lantibiotics is based on depolarization of energized bacterial cytoplasmic membranes, initiated by the formation of aqueous transmembrane pores. The polypeptide is Lantibiotic salivaricin-A (salA) (Streptococcus salivarius).